The chain runs to 361 residues: RuBisCO accumulation factor 1 (361 aa).

The tract at residues 16 to 197 is N-terminal alpha-helix; that stretch reads NELAQELLRK…RKQIEQLLVD (182 aa). Positions 221-347 are C-terminal beta-sheet; sequence PRIVPVVGQL…VIILVRPRRI (127 aa).

It belongs to the RAF family. Homodimer. Forms an RbcL(8)-Raf1(8) complex. Each Raf1 dimer clamps the exterior of an RbcL dimer, protecting it. The extreme C-terminus (residues 354-361) inserts into the catalytic pocket of RbcL where the Glu-361 forms a salt bridge with 'Lys-202'. This insertion probably contributes to the assembly of RbcL(8). Forms complexes of many stoichiometries with RbcL with and without RbcS. RbcX and Raf1 can bind simultaneously to RbcL.

Its subcellular location is the cytoplasm. Its function is as follows. A major RuBisCO chaperone. Acts after GroEL-GroES chaperonin to fold and/or assemble the large subunit of RuBisCO (ccbL, rbcL). Cooperates with RbcX in RbcL folding, plays the major role in assembly of dimers into RbcL(8)-Raf1(8) intermediate complexes. RbcS replaces Raf1, leading to holoenzyme formation. In terms of biological role, in vitro acts as an antagonist to CcmM35, suggesting it might regulate RuBisCO condensation and decondensation. The chain is RuBisCO accumulation factor 1 from Nostoc sp. (strain PCC 7120 / SAG 25.82 / UTEX 2576).